The chain runs to 163 residues: uncharacterized protein (163 aa).

Belongs to the IMPDH/GMPR family.

This is an uncharacterized protein from Haemophilus influenzae (strain ATCC 51907 / DSM 11121 / KW20 / Rd).